The following is a 389-amino-acid chain: Succinate--CoA ligase [ADP-forming] subunit beta (389 aa).

The ATP-grasp domain maps to 9–236 (KELFAKHGVP…RDATDPLELK (228 aa)). Residues K45, 52–54 (GRG), S94, and E99 each bind ATP. 2 residues coordinate Mg(2+): N191 and D205. Substrate is bound by residues N256 and 318 to 320 (GIT).

Belongs to the succinate/malate CoA ligase beta subunit family. As to quaternary structure, heterotetramer of two alpha and two beta subunits. It depends on Mg(2+) as a cofactor.

The catalysed reaction is succinate + ATP + CoA = succinyl-CoA + ADP + phosphate. It carries out the reaction GTP + succinate + CoA = succinyl-CoA + GDP + phosphate. It functions in the pathway carbohydrate metabolism; tricarboxylic acid cycle; succinate from succinyl-CoA (ligase route): step 1/1. In terms of biological role, succinyl-CoA synthetase functions in the citric acid cycle (TCA), coupling the hydrolysis of succinyl-CoA to the synthesis of either ATP or GTP and thus represents the only step of substrate-level phosphorylation in the TCA. The beta subunit provides nucleotide specificity of the enzyme and binds the substrate succinate, while the binding sites for coenzyme A and phosphate are found in the alpha subunit. This chain is Succinate--CoA ligase [ADP-forming] subunit beta, found in Rhodococcus erythropolis (strain PR4 / NBRC 100887).